The sequence spans 104 residues: L-rhamnose mutarotase (104 aa).

Tyr-18 provides a ligand contact to substrate. His-22 serves as the catalytic Proton donor. Substrate contacts are provided by residues Tyr-41 and Trp-76 to Trp-77.

Belongs to the rhamnose mutarotase family. As to quaternary structure, homodimer.

Its subcellular location is the cytoplasm. The enzyme catalyses alpha-L-rhamnose = beta-L-rhamnose. It participates in carbohydrate metabolism; L-rhamnose metabolism. Functionally, involved in the anomeric conversion of L-rhamnose. This chain is L-rhamnose mutarotase, found in Sinorhizobium medicae (strain WSM419) (Ensifer medicae).